The chain runs to 426 residues: Histidine--tRNA ligase (426 aa).

This sequence belongs to the class-II aminoacyl-tRNA synthetase family. In terms of assembly, homodimer.

It localises to the cytoplasm. The catalysed reaction is tRNA(His) + L-histidine + ATP = L-histidyl-tRNA(His) + AMP + diphosphate + H(+). In Shewanella baltica (strain OS223), this protein is Histidine--tRNA ligase.